The primary structure comprises 392 residues: Bifunctional enzyme Fae/Hps (392 aa).

Residues 1 to 161 (MFQIGEALMG…EESNKSTHAI (161 aa)) form a formaldehyde-activating enzyme region. Histidine 17 functions as the Proton donor in the catalytic mechanism. Substrate contacts are provided by aspartate 19, leucine 48, lysine 66, threonine 68, and glutamine 83. Residues 162–392 (MGFKVTRLWD…IDQFRVMTDF (231 aa)) are 3-hexulose-6-phosphate synthase.

It in the N-terminal section; belongs to the formaldehyde-activating enzyme family. This sequence in the C-terminal section; belongs to the HPS/KGPDC family. HPS subfamily.

The catalysed reaction is 5,6,7,8-tetrahydromethanopterin + formaldehyde = 5,10-methylenetetrahydromethanopterin + H2O. It catalyses the reaction D-ribulose 5-phosphate + formaldehyde = D-arabino-hex-3-ulose 6-phosphate. Its pathway is carbohydrate biosynthesis; D-ribose 5-phosphate biosynthesis. In terms of biological role, catalyzes the condensation of formaldehyde with tetrahydromethanopterin (H(4)MPT) to 5,10-methylenetetrahydromethanopterin. Its function is as follows. Catalyzes the reversible formation of ribulose-5-phosphate and formaldehyde from 3-hexulose-6-phosphate. This Methanosarcina barkeri (strain Fusaro / DSM 804) protein is Bifunctional enzyme Fae/Hps.